The chain runs to 601 residues: MKTIISLIFIMFPLFVSAHNGNFYRADSRSPNEIKDLGGLYPRGYYDFFERGTPMSISLYDHARGAPSGNTRYDDGFVSTTTDIDSAHEIGQNILSGYTEYYIYLIAPAPNLLDVNAVLGRYSPHPQENEYSALGGIPWTQVIGWYVVNNGVLDRNIHRNRQFRADLFNNLSPALPSESYQFAGFEPEHPAWRQEPWINFAPPGCGRNVRLTKHINQQDCSNSQEELVYKKLQDLRTQFKVDKKLKLVNKTSSNNIIFPNHDFIREWVDLDGNGDLSYCGFTVDSDGSRKRIVCAHNNGNFTYSSINISLSDYGWPKGQRFIDANGDGLVDYCRVQYVWTHLYCSLSLPGQYFSLDKDAGYLDAGYNNSRAWAKVIGTNKYSFCRLTSNGYICTDIDSYSTAFKDDDQGWADSRYWMDIDGNGGDDYCRLVYNWTHLRCNLQGKDGLWKRVESKYLDGGYPSLRFKIKMTSNKDNYCRIVRNHRVMECAYVSDNGEFHNYSLNMPFSLYNKNDIQFIDIDGDNRDDICRYNSAPNTMECYLNQDKSFSQNKLVLYLSAKPISSLGSGSSKIIRTFNSEKNSSAYCYNAGYGTLRCDEFVIY.

The N-terminal stretch at 1-18 is a signal peptide; it reads MKTIISLIFIMFPLFVSA. NAD(+) is bound by residues 26–43 and Glu-130; that span reads ADSR…LYPR. Glu-130 is an active-site residue. A disulfide bridge links Cys-205 with Cys-220.

The protein belongs to the enterotoxin A family.

The protein resides in the secreted. The catalysed reaction is L-arginyl-[protein] + NAD(+) = N(omega)-(ADP-D-ribosyl)-L-arginyl-[protein] + nicotinamide + H(+). Functionally, a probable mono(ADP-ribosyl)transferase, it may ADP-ribosylate Arg in target protein(s). Upon expression in yeast cells causes cell death. The polypeptide is NAD(+)--arginine ADP-ribosyltransferase Chelt (Vibrio cholerae).